Here is a 589-residue protein sequence, read N- to C-terminus: Acyl-CoA ligase SID4 (589 aa).

The PTS2-type peroxisomal targeting signal motif lies at 12–20 (RLQQTLNHI). ATP contacts are provided by residues 228–236 (TSGSTGNPK), 367–372 (SSYGLT), Asp-458, and Arg-473. Substrate is bound at residue Thr-372. CoA is bound by residues 481-483 (GGE), Lys-547, and 555-557 (FGL). Residue Lys-572 participates in ATP binding.

Belongs to the ATP-dependent AMP-binding enzyme family.

It is found in the peroxisome. It participates in siderophore biosynthesis. Its function is as follows. Acyl-CoA ligase; part of the gene cluster that mediates the biosynthesis of hydroxamate-containing siderophores that play a critical role in virulence via intracellular iron acquisition during macrophage infection. The sequence is that of Acyl-CoA ligase SID4 from Ajellomyces capsulatus (Darling's disease fungus).